The primary structure comprises 279 residues: uncharacterized protein (279 aa).

Belongs to the peptidase C59 family.

This is an uncharacterized protein from Chlorella (PBCV-1).